We begin with the raw amino-acid sequence, 863 residues long: Glycerol-3-phosphate acyltransferase (863 aa).

Positions Met1–Thr29 are disordered. The segment covering Glu12 to Thr29 has biased composition (polar residues). Residues Ser343–Ile348 carry the HXXXXD motif motif.

It belongs to the GPAT/DAPAT family.

The protein localises to the cell inner membrane. The catalysed reaction is sn-glycerol 3-phosphate + an acyl-CoA = a 1-acyl-sn-glycero-3-phosphate + CoA. It functions in the pathway phospholipid metabolism; CDP-diacylglycerol biosynthesis; CDP-diacylglycerol from sn-glycerol 3-phosphate: step 1/3. The polypeptide is Glycerol-3-phosphate acyltransferase (Xylella fastidiosa (strain M12)).